The sequence spans 475 residues: Chromosomal replication initiator protein DnaA (475 aa).

The tract at residues 1–71 (MTNDTWNEVR…RQLSAHGAGA (71 aa)) is domain I, interacts with DnaA modulators. A domain II region spans residues 71-133 (ADRVKFTVSP…PAQPRELPGA (63 aa)). A compositionally biased stretch (low complexity) spans 107–127 (APAPVHHTAPAPAPVAAPAQP). Residues 107 to 129 (APAPVHHTAPAPAPVAAPAQPRE) are disordered. The domain III, AAA+ region stretch occupies residues 134-355 (KLNPNFTFAN…GALTRLFAFA (222 aa)). ATP contacts are provided by Gly178, Gly180, Lys181, and Thr182. Residues 356 to 475 (DLVRREVTVD…AELLRRTLEA (120 aa)) form a domain IV, binds dsDNA region.

It belongs to the DnaA family. In terms of assembly, oligomerizes as a right-handed, spiral filament on DNA at oriC.

Its subcellular location is the cytoplasm. Plays an essential role in the initiation and regulation of chromosomal replication. ATP-DnaA binds to the origin of replication (oriC) to initiate formation of the DNA replication initiation complex once per cell cycle. Binds the DnaA box (a 9 base pair repeat at the origin) and separates the double-stranded (ds)DNA. Forms a right-handed helical filament on oriC DNA; dsDNA binds to the exterior of the filament while single-stranded (ss)DNA is stabiized in the filament's interior. The ATP-DnaA-oriC complex binds and stabilizes one strand of the AT-rich DNA unwinding element (DUE), permitting loading of DNA polymerase. After initiation quickly degrades to an ADP-DnaA complex that is not apt for DNA replication. Binds acidic phospholipids. The chain is Chromosomal replication initiator protein DnaA from Jannaschia sp. (strain CCS1).